A 540-amino-acid polypeptide reads, in one-letter code: Kinesin light chain (540 aa).

The stretch at 34–138 forms a coiled coil; the sequence is LETSVKGVKE…NKHLKYMASI (105 aa). TPR repeat units follow at residues 206-239, 248-281, 290-323, 332-365, 374-407, and 456-489; these read LRTL…LEKT, ATML…REKC, AATL…REKV, AKQL…YESK, AKTK…AHER, and TTTL…KKQH.

Belongs to the kinesin light chain family. In terms of assembly, oligomeric complex composed of two heavy chains and two light chains. Interacts with unc-83; the interaction is direct. Interacts with unc-33; the interaction regulates unc-33 neurite localization. Interacts with casy-1.

It is found in the cytoplasm. The protein resides in the cytoskeleton. It localises to the nucleus envelope. Functionally, kinesin is a microtubule-associated force-producing protein that may play a role in organelle transport. The light chain may function in coupling of cargo to the heavy chain or in the modulation of its ATPase activity. Recruits unc-83 (within the unc-83-unc-84 LINC complex) to the nuclear envelope during nuclear migration to mediate the link between the nuclear envelope and the microtubule cytoskeleton in hypodermal precursor cells. This is Kinesin light chain from Caenorhabditis elegans.